Here is a 568-residue protein sequence, read N- to C-terminus: Urease subunit alpha (568 aa).

The 436-residue stretch at 133–568 (GGVDTHIHFI…LPLAQKYFLF (436 aa)) folds into the Urease domain. Ni(2+)-binding residues include His138, His140, and Lys221. Residue Lys221 is modified to N6-carboxylysine. A substrate-binding site is contributed by His223. Positions 250 and 276 each coordinate Ni(2+). The active-site Proton donor is the His324. Asp364 is a binding site for Ni(2+).

It belongs to the metallo-dependent hydrolases superfamily. Urease alpha subunit family. In terms of assembly, heterohexamer of 3 UreC (alpha) and 3 UreAB (gamma/beta) subunits. Requires Ni cation as cofactor. Carboxylation allows a single lysine to coordinate two nickel ions.

Its subcellular location is the cytoplasm. It carries out the reaction urea + 2 H2O + H(+) = hydrogencarbonate + 2 NH4(+). It participates in nitrogen metabolism; urea degradation; CO(2) and NH(3) from urea (urease route): step 1/1. The polypeptide is Urease subunit alpha (Deinococcus radiodurans (strain ATCC 13939 / DSM 20539 / JCM 16871 / CCUG 27074 / LMG 4051 / NBRC 15346 / NCIMB 9279 / VKM B-1422 / R1)).